A 303-amino-acid polypeptide reads, in one-letter code: MIKHYPDNASNSFLKLRNSLISATGKAIGDYNMIEDGDTILVCMSGGKDSYTMLMMLLALQERAPVNFKLIAMNLDQKQPGFPAHILPAYLEQLGVDHRIVEADTYSIVKEKIPEGKTTCSLCSRLRRGIIYRTAQELGANKIALGHHRDDIVETLFLNMFFGAKMKAMPPKLATNKGEFHVIRPLAYCAEKDIASYARGMDFPIIPCDLCGSQENLQRQKVKDMLQAWEREQPGRVNNIFRAICNVEPSHLADTDLYDFKHMSQSKAEDEDPLFGDIDKESNPALSLVSSEGFRIEFKRNIA.

A PP-loop motif motif is present at residues 45-50 (SGGKDS). [4Fe-4S] cluster contacts are provided by cysteine 120, cysteine 123, and cysteine 211.

This sequence belongs to the TtcA family. As to quaternary structure, homodimer. It depends on Mg(2+) as a cofactor. The cofactor is [4Fe-4S] cluster.

It is found in the cytoplasm. The catalysed reaction is cytidine(32) in tRNA + S-sulfanyl-L-cysteinyl-[cysteine desulfurase] + AH2 + ATP = 2-thiocytidine(32) in tRNA + L-cysteinyl-[cysteine desulfurase] + A + AMP + diphosphate + H(+). It participates in tRNA modification. Catalyzes the ATP-dependent 2-thiolation of cytidine in position 32 of tRNA, to form 2-thiocytidine (s(2)C32). The sulfur atoms are provided by the cysteine/cysteine desulfurase (IscS) system. The polypeptide is tRNA-cytidine(32) 2-sulfurtransferase (Methylobacillus flagellatus (strain ATCC 51484 / DSM 6875 / VKM B-1610 / KT)).